The chain runs to 579 residues: Mycobactin import ATP-binding/permease protein IrtB (579 aa).

Residues 1–16 are Cytoplasmic-facing; it reads MIRTWIALVPNDHRAR. A helical membrane pass occupies residues 17–37; that stretch reads LIGFALLAFCSVVARAVGTVL. The region spanning 17–299 is the ABC transmembrane type-1 domain; it reads LIGFALLAFC…VSELAPALES (283 aa). Over 38–52 the chain is Periplasmic; it reads LVPLMAALFGEAPQR. Residues 53–73 traverse the membrane as a helical segment; it reads AWLWLGWLSAATVAGWVLDAV. Residues 74 to 123 are Cytoplasmic-facing; it reads TARIGIELGFAVLNHTQHDVADRLPVVRLDWFTAENTATARQAIAATGPE. A helical membrane pass occupies residues 124–146; it reads LVGLVVNLVTPLTSAILLPAVIA. Residues 147–155 are Periplasmic-facing; that stretch reads LALLPISWQ. The chain crosses the membrane as a helical span at residues 156–178; the sequence is LGVAALAGVPLLLGALWASAAFA. The Cytoplasmic portion of the chain corresponds to 179 to 237; that stretch reads RRADTAADKANTALTERIIEFARTQQALRAARRVEPARSLVGNALASQHTATMRLLGMQ. The helical transmembrane segment at 238–258 threads the bilayer; that stretch reads IPGQLLFSIASQLALIVLAGT. Residues 259 to 579 lie on the Periplasmic side of the membrane; the sequence is TAALTITGTL…EAAEWQILAE (321 aa). Residues 332 to 567 enclose the ABC transporter domain; the sequence is IEFDDVAFGY…GGRFSQFWRQ (236 aa). Position 366–373 (366–373) interacts with ATP; sequence GPSGCGKS.

Belongs to the ABC transporter superfamily. Siderophore-Fe(3+) uptake transporter (SIUT) (TC 3.A.1.21) family. Forms a heterodimer with IrtA.

It is found in the cell inner membrane. Part of the ABC transporter complex IrtAB involved in the import of iron-bound mycobactin (Fe-MBT) and carboxymycobactin (Fe-cMBT). Transmembrane domains (TMD) form a pore in the membrane and the ATP-binding domain (NBD) is responsible for energy generation. This chain is Mycobactin import ATP-binding/permease protein IrtB (irtB), found in Mycobacterium bovis (strain ATCC BAA-935 / AF2122/97).